A 158-amino-acid chain; its full sequence is Urease accessory protein UreE (158 aa).

Belongs to the UreE family.

The protein localises to the cytoplasm. In terms of biological role, involved in urease metallocenter assembly. Binds nickel. Probably functions as a nickel donor during metallocenter assembly. The protein is Urease accessory protein UreE of Corynebacterium urealyticum (strain ATCC 43042 / DSM 7109).